Here is a 179-residue protein sequence, read N- to C-terminus: Large ribosomal subunit protein uL5 (179 aa).

The protein belongs to the universal ribosomal protein uL5 family. Part of the 50S ribosomal subunit; part of the 5S rRNA/L5/L18/L25 subcomplex. Contacts the 5S rRNA and the P site tRNA. Forms a bridge to the 30S subunit in the 70S ribosome.

Functionally, this is one of the proteins that bind and probably mediate the attachment of the 5S RNA into the large ribosomal subunit, where it forms part of the central protuberance. In the 70S ribosome it contacts protein S13 of the 30S subunit (bridge B1b), connecting the 2 subunits; this bridge is implicated in subunit movement. Contacts the P site tRNA; the 5S rRNA and some of its associated proteins might help stabilize positioning of ribosome-bound tRNAs. The polypeptide is Large ribosomal subunit protein uL5 (Francisella philomiragia subsp. philomiragia (strain ATCC 25017 / CCUG 19701 / FSC 153 / O#319-036)).